We begin with the raw amino-acid sequence, 1219 residues long: MMNAIPVKPTGTRWTDNQWKSIYAKGQDILVAAAAGSGKTAVLVERIIQRIIRDEIDVDKLLVVTFTNASAREMKQRVDQRIQEASIENPDNAHLKNQRVKIHQAQISTLHSFCLKLIQQHYDVLDIDPNFRTSSEAENILLLEQTIDEVLERHYDILDPHFIDLTEQLSSDRNDDQLRNTIKEMYYFSVANPNPLNWLQHLSTPYEDESQQETLFNLLNDLAMIFMNSALEALNKSYDLFMMLEEVDKQVAVLDKERRFLAEAMEGGLLNTQKIAEHQFESRFPAKNKKIKEANEMMIDAYDDGKKHYDDYKALVSKVQEDYFSREAADLKTDMQRLAPRVAYLAQVTADVIEQFNQKKRSRNLLDFSDYEHFALRILMDSNGNPSEIADMYRKQFEEILVDEYQDTNRVQEKIIACIKRGDEADGNLFMVGDVKQSIYKFRQADPSLFIGKYNRFTLDGSEHGMRIDLSQNFRSREEVLTTTNYLFKHMMDEAVGEIVYDDAAQLYYGAPFDHKPHDVQLNMLIEDASSDLNGSEQEAEYIVQQVEKIMSQHEIYDIKTEQYRKPSYKDIVILERSYGQARKIQQAFKDHNIPFHVNSKEGYFEQTEVQLILSFLRTIDNPLQDIYLVGLMRSVIYQFTEDELSNIRVFSPNDDYFYQSIKHYMANDVANKKLVAKLASFLEDIEQYQDYSQSHPVYQLIDKFYNDHYVIQYFSGIIGGKGRRANLYGLFNKAVEFENSSFRGLYQFIRFIDELIERGKDFGEENIVGPNDDVVRMMTIHSSKGLEFPFVIYSGLSRKFRRDDLHRPVILNQSYGLGMAYYDVESNLSYPSLSSVTYKAIAEKEMVSEEMRLIYVALTRAKEQLFLIGRVKDEKTLSQFEQVSVSESHLPVSYRITAQRPIDMIYPILAKYQSSSLPNELRFEQTIEDVDQAMRPYVQLNTDFYEDIASETVTDVSEQRTVADIEMNHSKNEALQAQIHNQLSYEYPYQSAIEKPSKQSVSELKRQHETEQSDTNYDRVRQYRIGSTSYERPAFLSRSKQRKANEIGTLMHTVMQHLPFNKDRLTEEDVNRLVDHLIAQHIIPEDAKQDIRFDDIYNFIASDLYQLIAESDEIYRELPFVVNQNEVDHNKHSEEDASIIQGMIDLIFVKEGQYYFVDYKTDAFNRRRNMSDEEIGAQLRERYKVQMNHYRNTLETILKTDVKGFLYFFKFGQLSIEG.

In terms of domain architecture, UvrD-like helicase ATP-binding spans 12–477; the sequence is TRWTDNQWKS…IDLSQNFRSR (466 aa). 33–40 is an ATP binding site; sequence AAAGSGKT. Residues 478–786 enclose the UvrD-like helicase C-terminal domain; it reads EEVLTTTNYL…RMMTIHSSKG (309 aa). Positions 997 to 1016 are disordered; it reads PSKQSVSELKRQHETEQSDT. Over residues 1004–1016 the composition is skewed to basic and acidic residues; the sequence is ELKRQHETEQSDT.

The protein belongs to the helicase family. AddA subfamily. As to quaternary structure, heterodimer of AddA and AddB/RexB. Mg(2+) is required as a cofactor.

It carries out the reaction Couples ATP hydrolysis with the unwinding of duplex DNA by translocating in the 3'-5' direction.. It catalyses the reaction ATP + H2O = ADP + phosphate + H(+). Its function is as follows. The heterodimer acts as both an ATP-dependent DNA helicase and an ATP-dependent, dual-direction single-stranded exonuclease. Recognizes the chi site generating a DNA molecule suitable for the initiation of homologous recombination. The AddA nuclease domain is required for chi fragment generation; this subunit has the helicase and 3' -&gt; 5' nuclease activities. The polypeptide is ATP-dependent helicase/nuclease subunit A (Staphylococcus saprophyticus subsp. saprophyticus (strain ATCC 15305 / DSM 20229 / NCIMB 8711 / NCTC 7292 / S-41)).